Reading from the N-terminus, the 336-residue chain is N-acetyl-gamma-glutamyl-phosphate reductase (336 aa).

Cys-156 is a catalytic residue.

The protein belongs to the NAGSA dehydrogenase family. Type 1 subfamily.

It is found in the cytoplasm. The catalysed reaction is N-acetyl-L-glutamate 5-semialdehyde + phosphate + NADP(+) = N-acetyl-L-glutamyl 5-phosphate + NADPH + H(+). Its pathway is amino-acid biosynthesis; L-arginine biosynthesis; N(2)-acetyl-L-ornithine from L-glutamate: step 3/4. Its function is as follows. Catalyzes the NADPH-dependent reduction of N-acetyl-5-glutamyl phosphate to yield N-acetyl-L-glutamate 5-semialdehyde. The polypeptide is N-acetyl-gamma-glutamyl-phosphate reductase (Moritella abyssi).